The sequence spans 98 residues: Large ribosomal subunit protein uL23 (98 aa).

This sequence belongs to the universal ribosomal protein uL23 family. As to quaternary structure, part of the 50S ribosomal subunit. Contacts protein L29, and trigger factor when it is bound to the ribosome.

One of the early assembly proteins it binds 23S rRNA. One of the proteins that surrounds the polypeptide exit tunnel on the outside of the ribosome. Forms the main docking site for trigger factor binding to the ribosome. The chain is Large ribosomal subunit protein uL23 from Bordetella bronchiseptica (strain ATCC BAA-588 / NCTC 13252 / RB50) (Alcaligenes bronchisepticus).